The following is a 67-amino-acid chain: Large ribosomal subunit protein bL31 (67 aa).

4 residues coordinate Zn(2+): cysteine 16, cysteine 18, cysteine 36, and cysteine 39.

It belongs to the bacterial ribosomal protein bL31 family. Type A subfamily. In terms of assembly, part of the 50S ribosomal subunit. It depends on Zn(2+) as a cofactor.

Functionally, binds the 23S rRNA. This Desulforudis audaxviator (strain MP104C) protein is Large ribosomal subunit protein bL31.